A 325-amino-acid polypeptide reads, in one-letter code: uncharacterized protein (325 aa).

The segment at 37–85 (EKPTYTPAKPVKKAPSVVQPRRVSRTLRSSESVHTNHGPERVFESPTPA) is disordered. Serine 52 is modified (phosphoserine). Positions 62–71 (TLRSSESVHT) are enriched in polar residues. Positions 153-311 (EDEGKKCLIL…IDLIPFLEHL (159 aa)) constitute an FCP1 homology domain.

This is an uncharacterized protein from Schizosaccharomyces pombe (strain 972 / ATCC 24843) (Fission yeast).